The following is a 256-amino-acid chain: Tyrosine-protein kinase-interacting protein (256 aa).

Acidic residues predominate over residues 1–14 (MANEGEEIELTEFP). A disordered region spans residues 1-49 (MANEGEEIELTEFPETEKERKDEEKLSSCSEETTNTSSSSGSDHVPVPI). Residues 1-228 (MANEGEEIEL…DLKRLENKIN (228 aa)) are Cytoplasmic-facing. Residues 15–26 (ETEKERKDEEKL) are compositionally biased toward basic and acidic residues. Low complexity predominate over residues 27–42 (SSCSEETTNTSSSSGS). Residue Y114 is modified to Phosphotyrosine; by host LCK. Y127 carries the post-translational modification Phosphotyrosine; by host. The tract at residues 146 to 155 (EDLQSFLEKY) is CSKH/LBD2. A disordered region spans residues 162 to 183 (PKRDLSATWDPGMPTPPLPPRP). Positions 174 to 183 (MPTPPLPPRP) are SH3B/LBD1. Over residues 174-183 (MPTPPLPPRP) the composition is skewed to pro residues. Residues 229–249 (VIICLVVVILAVLLLVTVLSI) traverse the membrane as a helical segment. The Extracellular portion of the chain corresponds to 250 to 256 (LHIGMKS).

As to quaternary structure, binds host LCK, human WDR48 and human NXF1/TAP. Forms a complex with activated LCK and STAT1 and STAT3. Post-translationally, phosphorylation on Tyr-114 acts as a docking site for the recruitment of STATs 1 and 3.

The protein localises to the host cell membrane. Functionally, plays a critical role in virus induced T-cell transformation. Binds to T-cell-specific tyrosine kinase LCK SH2 and SH3 domains, thereby activating its kinase activity. Once phosphorylated by host LCK, forms a complex with at least STAT 1 and 3, resulting on the phosphorylation of STAT3 and presumably STAT1, and their migration into the nucleus to induce transcription of target genes. Stimulates host ILF3/NF-AT-90 activity. Association with host NXF1/TAP transduces the signal up-regulating surface expression of adhesion molecules as well as activating NF-kappa-B activity. Acts synergistically with StpC to stimulate NF-kappa-B activity and interleukin-2 gene expression. Activation of NF-kappa-B protects lymphocytes from apoptosis, thereby facilitating viral induced cell transformation. May cause down-regulation of host LCK and cell apoptosis when stably overexpressed ex vivo. Interaction with WDR48 induce degradation of T-cell receptor in a lysosome-dependent fashion, when both proteins are overexpressed. The biological effect of this interaction remains controversial since no T-cell receptor degradation is observed in infected cells. The sequence is that of Tyrosine-protein kinase-interacting protein from Saimiri sciureus (Common squirrel monkey).